The following is a 338-amino-acid chain: Phosphoribosylformylglycinamidine cyclo-ligase (338 aa).

It belongs to the AIR synthase family.

Its subcellular location is the cytoplasm. The enzyme catalyses 2-formamido-N(1)-(5-O-phospho-beta-D-ribosyl)acetamidine + ATP = 5-amino-1-(5-phospho-beta-D-ribosyl)imidazole + ADP + phosphate + H(+). It functions in the pathway purine metabolism; IMP biosynthesis via de novo pathway; 5-amino-1-(5-phospho-D-ribosyl)imidazole from N(2)-formyl-N(1)-(5-phospho-D-ribosyl)glycinamide: step 2/2. The sequence is that of Phosphoribosylformylglycinamidine cyclo-ligase from Thermoplasma acidophilum (strain ATCC 25905 / DSM 1728 / JCM 9062 / NBRC 15155 / AMRC-C165).